A 147-amino-acid polypeptide reads, in one-letter code: Male-specific protein scotti (147 aa).

Residues 55 to 93 (PQEPPLGVFPAQGGPNGPPRRRKKRSFYTMTKPTPPCQS) form a disordered region. Over residues 82–93 (YTMTKPTPPCQS) the composition is skewed to polar residues. Asparagine 128 carries N-linked (GlcNAc...) asparagine glycosylation.

The protein belongs to the male-specific scotti family. Expressed in primary spermatocytes and round spermatids. Low expression is seen in very short elongating cysts, but were detected at high levels in a few longer spermatid cysts.

Its function is as follows. Post-meiotically transcribed gene that has a role in late spermiogenesis; required for actin cone progression during spermatid individualization. The polypeptide is Male-specific protein scotti (Drosophila melanogaster (Fruit fly)).